Consider the following 617-residue polypeptide: Sphingosine kinase 2 (617 aa).

The required for binding to sulfatide and phosphoinositides and for membrane localization stretch occupies residues 1–140 (MAPPPLLPVA…LSGDQEITPE (140 aa)). The Nuclear localization signal signature appears at 87-95 (RGRRGGRRR). Residues 143–290 (PRKPRLLILV…LDLLSVTLAS (148 aa)) form the DAGKc domain. Residues 153–155 (NPF) and 185–189 (TERQN) contribute to the ATP site. Position 210 to 213 (210 to 213 (SGDG)) interacts with substrate. D212 acts as the Proton donor/acceptor in catalysis. Residues E217 and 242–244 (GSG) each bind ATP. Position 309 (D309) interacts with substrate. 2 residues coordinate ATP: R316 and R322. S358 and S364 each carry phosphoserine. Residues 371 to 472 (APAPAATHSP…GFLPPTHSAP (102 aa)) are disordered. Position 377 is a phosphothreonine (T377). Positions 381–390 (LHRSVSDLPL) match the Nuclear export signal motif. Phosphoserine occurs at positions 384 and 386. The span at 412–426 (NGGGPELTGDWGGAG) shows a compositional bias: gly residues. T578 is modified (phosphothreonine). 586–588 (DGE) contributes to the ATP binding site.

Interacts with histone H3. Interacts with HDAC1, HDAC2, MBD2 and SIN3A. Interacts with EEF1A1; the interaction enhances SPHK2 kinase activity. Interacts with PHB2. The cofactor is Mg(2+). Phosphorylated by PKD on Ser-384 and Ser-386 upon PMA treatment. Phosphorylation induces export from the nucleus to the cytoplasm. Phosphorylated by MAPK1 and MAPK2 at Thr-578, phosphorylation is induced by agonists such as EGF and PMA and increases kinase activity. In terms of processing, cleaved by CASP1 in apoptotic cells. The truncated form is released from cells. As to expression, expressed in heart, brain, liver, kidney and testis. Expressed by mast cells (at protein level). In the substantia nigra, expressed by dopaminergic neurons (at protein level).

The protein localises to the lysosome membrane. It localises to the cytoplasm. Its subcellular location is the cell membrane. It is found in the endoplasmic reticulum. The protein resides in the nucleus. The protein localises to the mitochondrion inner membrane. The catalysed reaction is a sphingoid base + ATP = a sphingoid 1-phosphate + ADP + H(+). The enzyme catalyses sphing-4-enine + ATP = sphing-4-enine 1-phosphate + ADP + H(+). It carries out the reaction sphinganine + ATP = sphinganine 1-phosphate + ADP + H(+). It catalyses the reaction (4R)-hydroxysphinganine + ATP = (4R)-hydroxysphinganine 1-phosphate + ADP + H(+). Its function is as follows. Catalyzes the phosphorylation of sphingosine to form sphingosine-1-phosphate (SPP), a lipid mediator with both intra- and extracellular functions. Also acts on D-erythro-dihydrosphingosine, D-erythro-sphingosine and L-threo-dihydrosphingosine. Binds phosphoinositides. In contrast to prosurvival SPHK1, has a positive effect on intracellular ceramide levels, inhibits cells growth and enhances apoptosis. In mitochondria, is important for cytochrome-c oxidase assembly and mitochondrial respiration. The SPP produced in mitochondria binds PHB2 and modulates the regulation via PHB2 of complex IV assembly and respiration. In nucleus, plays a role in epigenetic regulation of gene expression. Interacts with HDAC1 and HDAC2 and, through SPP production, inhibits their enzymatic activity, preventing the removal of acetyl groups from lysine residues with histones. Up-regulates acetylation of histone H3-K9, histone H4-K5 and histone H2B-K12. In nucleus, may have an inhibitory effect on DNA synthesis and cell cycle. In mast cells, is the main regulator of SPP production which mediates calcium influx, NF-kappa-B activation, cytokine production, such as TNF and IL6, and degranulation of mast cells. In dopaminergic neurons, is involved in promoting mitochondrial functions regulating ATP and ROS levels. Also involved in the regulation of glucose and lipid metabolism. This Mus musculus (Mouse) protein is Sphingosine kinase 2.